Consider the following 405-residue polypeptide: MSKLNPYFGEYGGMYVPQILMPALKQLETAFIEAQQDEAFQKEFTDLLKNYAGRPTALTLTRNLSPNPLAKIYLKREDLLHGGAHKTNQVLGQALLAKRMGKKEIIAETGAGQHGVATALACALLDLKCKVYMGAKDVERQSPNVFRMKLMGAEVIPVTSGSATLKDACNEAMRDWSASYDKAHYLLGTAAGPHPFPTIVREFQRMIGAETKQQILEREGRLPDAVIACVGGGSNAIGMFADFIDEEEVALIGVEPAGKGIDTPMHGAPLKHGKTGIFFGMKAPLMQDSEGQIEESYSVSAGLDFPSVGPQHAHLAATGRATYESATDDEALETFQLLARSEGIIPALESAHALAYAVKLAKAATKETLLVVNLSGRGDKDIFTVADILEKQQADSSTTEESGNE.

Lys-86 is modified (N6-(pyridoxal phosphate)lysine).

The protein belongs to the TrpB family. In terms of assembly, tetramer of two alpha and two beta chains. It depends on pyridoxal 5'-phosphate as a cofactor.

The catalysed reaction is (1S,2R)-1-C-(indol-3-yl)glycerol 3-phosphate + L-serine = D-glyceraldehyde 3-phosphate + L-tryptophan + H2O. It participates in amino-acid biosynthesis; L-tryptophan biosynthesis; L-tryptophan from chorismate: step 5/5. In terms of biological role, the beta subunit is responsible for the synthesis of L-tryptophan from indole and L-serine. The protein is Tryptophan synthase beta chain of Shewanella piezotolerans (strain WP3 / JCM 13877).